The sequence spans 258 residues: Transcription initiation factor TFIID subunit 9B (258 aa).

Met1 carries the N-acetylmethionine modification. A Phosphoserine modification is found at Ser147. Phosphothreonine is present on residues Thr159 and Thr174. Residue Ser177 is modified to Phosphoserine. The span at Ser227 to Asn236 shows a compositional bias: polar residues. The segment at Ser227–Met258 is disordered. A compositionally biased stretch (acidic residues) spans Asp244–Met258.

This sequence belongs to the TAF9 family. In terms of assembly, binds TAF5 and TAF6. Component of TFIID and the TATA-binding protein-free TAF complex (TFTC). TFIID is composed of TATA binding protein (TBP) and a number of TBP-associated factors (TAFs). Binds N-terminal domain of p53/TP53 which is essential for transcription.

It is found in the nucleus. In terms of biological role, essential for cell viability. TAF9 and TAF9L are involved in transcriptional activation as well as repression of distinct but overlapping sets of genes. May have a role in gene regulation associated with apoptosis. TAFs are components of the transcription factor IID (TFIID) complex, the TBP-free TAFII complex (TFTC), the PCAF histone acetylase complex and the STAGA transcription coactivator-HAT complex. TFIID or TFTC are essential for the regulation of RNA polymerase II-mediated transcription. The protein is Transcription initiation factor TFIID subunit 9B (Taf9b) of Rattus norvegicus (Rat).